Here is a 164-residue protein sequence, read N- to C-terminus: Ribosome maturation factor RimP (164 aa).

Belongs to the RimP family.

It is found in the cytoplasm. Required for maturation of 30S ribosomal subunits. The protein is Ribosome maturation factor RimP of Thermodesulfovibrio yellowstonii (strain ATCC 51303 / DSM 11347 / YP87).